A 151-amino-acid polypeptide reads, in one-letter code: Neuroglobin (151 aa).

One can recognise a Globin domain in the interval 1–149 (MERPESELIR…VVQAMSRGWD (149 aa)). His-64 and His-96 together coordinate heme b.

This sequence belongs to the globin family. As to quaternary structure, monomer. Homodimer and homotetramer; disulfide-linked. Mainly monomeric but also detected as part of homodimers and homotetramers. Interacts with 14-3-3 proteins; regulates the phosphorylation of NGB. Could interact (ferrous form) with G-alpha(i) proteins (GTP-bound form). Phosphorylated during hypoxia by ERK1/ERK2. Phosphorylation regulates the heme pocket hexacoordination preventing the association of His-64 with the heme metal center. Thereby, promotes the access of dioxygen and nitrite to the heme and stimulates the nitrite reductase activity. Phosphorylation during hypoxia is stabilized by 14-3-3 proteins. Widely distributed throughout the adult brain, including cerebral cortex, hippocampus, thalamus, hypothalamus, olfactory bulb, and cerebellum.

It is found in the cytoplasm. The protein localises to the cytosol. It localises to the mitochondrion matrix. The enzyme catalyses Fe(III)-heme b-[protein] + nitric oxide + H2O = Fe(II)-heme b-[protein] + nitrite + 2 H(+). Its function is as follows. Monomeric globin with a bis-histidyl six-coordinate heme-iron atom through which it can bind dioxygen, carbon monoxide and nitric oxide. Could help transport oxygen and increase its availability to the metabolically active neuronal tissues, though its low quantity in tissues as well as its high affinity for dioxygen, which may limit its oxygen-releasing ability, argue against it. The ferrous/deoxygenated form exhibits a nitrite reductase activity and it could produce nitric oxide which in turn inhibits cellular respiration in response to hypoxia. In its ferrous/deoxygenated state, it may also exhibit GDI (Guanine nucleotide Dissociation Inhibitor) activity toward heterotrimeric G-alpha proteins, thereby regulating signal transduction to facilitate neuroprotective responses in the wake of hypoxia and associated oxidative stress. This chain is Neuroglobin, found in Rattus norvegicus (Rat).